The following is a 166-amino-acid chain: Myosin regulatory light chain 2, ventricular/cardiac muscle isoform (166 aa).

Ser-2 is subject to N,N,N-trimethylserine. 3 positions are modified to phosphoserine: Ser-14, Ser-15, and Ser-19. EF-hand domains follow at residues 24–59 (TQIQEFKEAFTIMDQNRDGFIDKNDLRDTFAALGRV), 94–129 (DPEETILNAFKVFDPEGKGSLKADYVREMLTTQAER), and 130–165 (FSKEEIDQMFAAFPPDVTGNLDYKNLVHIITHGEEK). 4 residues coordinate Ca(2+): Asp-37, Asn-39, Asp-41, and Asp-48. Thr-52 bears the Phosphothreonine mark.

As to quaternary structure, myosin is a hexamer of 2 heavy chains and 4 light chains. Interacts with MYOC. In terms of processing, N-terminus is methylated by METTL11A/NTM1. Post-translationally, phosphorylated by MYLK3 and MYLK2; promotes cardiac muscle contraction and function. Dephosphorylated by PPP1CB complexed to PPP1R12B. The phosphorylated form in adult is expressed as gradients across the heart from endocardium (low phosphorylation) to epicardium (high phosphorylation); regulates cardiac torsion and workload distribution. As to expression, abundantly expressed in both cardiac and slow skeletal muscle (soleus), with no detectable expression in fast skeletal muscle (vastus lateralis) or non-muscle tissue.

The protein localises to the cytoplasm. Its subcellular location is the myofibril. The protein resides in the sarcomere. It is found in the a band. In terms of biological role, contractile protein that plays a role in heart development and function. Following phosphorylation, plays a role in cross-bridge cycling kinetics and cardiac muscle contraction by increasing myosin lever arm stiffness and promoting myosin head diffusion; as a consequence of the increase in maximum contraction force and calcium sensitivity of contraction force. These events altogether slow down myosin kinetics and prolong duty cycle resulting in accumulated myosins being cooperatively recruited to actin binding sites to sustain thin filament activation as a means to fine-tune myofilament calcium sensitivity to force. During cardiogenesis plays an early role in cardiac contractility by promoting cardiac myofibril assembly. The sequence is that of Myosin regulatory light chain 2, ventricular/cardiac muscle isoform from Rattus norvegicus (Rat).